Here is a 281-residue protein sequence, read N- to C-terminus: Phytanoyl-CoA dioxygenase 1 (281 aa).

Residues lysine 98, methionine 137, histidine 152–aspartate 154, and tryptophan 169 contribute to the 2-oxoglutarate site. Residues histidine 152 and aspartate 154 each contribute to the Fe cation site. Histidine 237 is a binding site for Fe cation. The 2-oxoglutarate site is built by serine 239 and arginine 248.

It belongs to the PhyH family. Requires Fe cation as cofactor. The cofactor is L-ascorbate.

The catalysed reaction is phytanoyl-CoA + 2-oxoglutarate + O2 = 2-hydroxyphytanoyl-CoA + succinate + CO2. The protein operates within lipid metabolism; fatty acid metabolism. Its function is as follows. Converts phytanoyl-CoA to 2-hydroxyphytanoyl-CoA. The polypeptide is Phytanoyl-CoA dioxygenase 1 (Oryza sativa subsp. japonica (Rice)).